Reading from the N-terminus, the 581-residue chain is Chaperonin GroEL 1 (581 aa).

ATP contacts are provided by residues 29–32 (TIGP), 86–90 (DGTTT), G413, and D492.

The protein belongs to the chaperonin (HSP60) family. In terms of assembly, forms a cylinder of 14 subunits composed of two heptameric rings stacked back-to-back. Interacts with the co-chaperonin GroES.

The protein localises to the cytoplasm. The catalysed reaction is ATP + H2O + a folded polypeptide = ADP + phosphate + an unfolded polypeptide.. In terms of biological role, together with its co-chaperonin GroES, plays an essential role in assisting protein folding. The GroEL-GroES system forms a nano-cage that allows encapsulation of the non-native substrate proteins and provides a physical environment optimized to promote and accelerate protein folding. This chain is Chaperonin GroEL 1, found in Prochlorococcus marinus subsp. pastoris (strain CCMP1986 / NIES-2087 / MED4).